The primary structure comprises 118 residues: UPF0102 protein RHA1_ro06551 (118 aa).

Belongs to the UPF0102 family.

The sequence is that of UPF0102 protein RHA1_ro06551 from Rhodococcus jostii (strain RHA1).